We begin with the raw amino-acid sequence, 702 residues long: Polyribonucleotide nucleotidyltransferase (702 aa).

Mg(2+)-binding residues include Asp486 and Asp492. The KH domain maps to 553 to 612 (PSMATIKIDPEKIRDVIGKGGATIRSITEQTGASIDLDDDGTVRIYAADKASSDAALLKI). Residues 622–690 (DKLYKGKVVR…ARGRIKLSMK (69 aa)) form the S1 motif domain.

Belongs to the polyribonucleotide nucleotidyltransferase family. As to quaternary structure, component of the RNA degradosome, which is a multiprotein complex involved in RNA processing and mRNA degradation. The cofactor is Mg(2+).

It is found in the cytoplasm. It carries out the reaction RNA(n+1) + phosphate = RNA(n) + a ribonucleoside 5'-diphosphate. Functionally, involved in mRNA degradation. Catalyzes the phosphorolysis of single-stranded polyribonucleotides processively in the 3'- to 5'-direction. The protein is Polyribonucleotide nucleotidyltransferase of Marinomonas sp. (strain MWYL1).